The chain runs to 140 residues: uncharacterized protein (140 aa).

A disordered region spans residues 80–115 (KNGTRRHALPSPLEGSFQPGRQIPPPQTPSTDPQTL).

This is an uncharacterized protein from Homo sapiens (Human).